A 329-amino-acid polypeptide reads, in one-letter code: Serine dehydratase-like (329 aa).

An N-acetylmethionine modification is found at Met-1. The residue at position 48 (Lys-48) is an N6-(pyridoxal phosphate)lysine.

This sequence belongs to the serine/threonine dehydratase family. Monomer. Homodimer. Pyridoxal 5'-phosphate serves as cofactor. In terms of tissue distribution, expressed in lung cancer cell lines.

The enzyme catalyses L-serine = pyruvate + NH4(+). The catalysed reaction is L-threonine = 2-oxobutanoate + NH4(+). It catalyses the reaction L-glutamate = D-glutamate. In terms of biological role, catalyzes the pyridoxal-phosphate-dependent dehydrative deamination of L-threonine and L-serine to ammonia and alpha-ketobutyrate and pyruvate, respectively. Also exhibits racemase activity towards L-glutamate and D-glutamate. The chain is Serine dehydratase-like (SDSL) from Homo sapiens (Human).